The primary structure comprises 250 residues: Sulfate transporter CysZ (250 aa).

Helical transmembrane passes span 27–47 (FVVLPLLANIILVGGAMYYLF), 64–84 (FLSWLSYVLWPLLALTILATF), 150–170 (FLLLLIPALGQTLGPIAWFLF), and 210–230 (MLVAFFTSIPIVNLFIVPVAV).

This sequence belongs to the CysZ family.

Its subcellular location is the cell inner membrane. Its function is as follows. High affinity, high specificity proton-dependent sulfate transporter, which mediates sulfate uptake. Provides the sulfur source for the cysteine synthesis pathway. The polypeptide is Sulfate transporter CysZ (Vibrio cholerae serotype O1 (strain ATCC 39541 / Classical Ogawa 395 / O395)).